A 327-amino-acid polypeptide reads, in one-letter code: BTB/POZ domain-containing protein KCTD12 (327 aa).

The interval Met-1 to Glu-28 is disordered. N-acetylalanine is present on Ala-2. Positions Pro-11 to Gly-21 are enriched in gly residues. Residue Tyr-119 is modified to Phosphotyrosine. Residues Leu-129–Asp-204 form a disordered region. Phosphoserine is present on residues Ser-153, Ser-173, and Ser-187. Position 198 is a phosphothreonine (Thr-198). Ser-202 carries the post-translational modification Phosphoserine.

As to quaternary structure, interacts as a tetramer with GABBR1 and GABBR2. In terms of tissue distribution, expressed in the brain, mainly in the hippocampus and cerebellum.

The protein localises to the presynaptic cell membrane. It is found in the postsynaptic cell membrane. Auxiliary subunit of GABA-B receptors that determine the pharmacology and kinetics of the receptor response. Increases agonist potency and markedly alter the G-protein signaling of the receptors by accelerating onset and promoting desensitization. The protein is BTB/POZ domain-containing protein KCTD12 (Kctd12) of Mus musculus (Mouse).